The following is a 46-amino-acid chain: Small, acid-soluble spore protein N (46 aa).

Residues 1–46 (MAKMKHGSAQFRPDHLGTQPRKSDANKGKKMNTKGNENPQYIPPKG) are disordered.

It belongs to the SspN family.

It localises to the spore core. This Halalkalibacterium halodurans (strain ATCC BAA-125 / DSM 18197 / FERM 7344 / JCM 9153 / C-125) (Bacillus halodurans) protein is Small, acid-soluble spore protein N.